Consider the following 106-residue polypeptide: Ig kappa chain C region, A allele (106 aa).

Positions 5 to 102 (PTVSIFPPSM…SSSPVVKSFN (98 aa)) constitute an Ig-like domain. A disulfide bridge connects residues Cys26 and Cys86.

This chain is Ig kappa chain C region, A allele, found in Rattus norvegicus (Rat).